Here is a 31-residue protein sequence, read N- to C-terminus: Cytochrome b6-f complex subunit 6 (31 aa).

Residues 4-24 traverse the membrane as a helical segment; that stretch reads LLSYFAFLMLALTFTLALFVG.

Belongs to the PetL family. As to quaternary structure, the 4 large subunits of the cytochrome b6-f complex are cytochrome b6, subunit IV (17 kDa polypeptide, PetD), cytochrome f and the Rieske protein, while the 4 small subunits are PetG, PetL, PetM and PetN. The complex functions as a dimer.

It localises to the plastid. It is found in the chloroplast thylakoid membrane. Component of the cytochrome b6-f complex, which mediates electron transfer between photosystem II (PSII) and photosystem I (PSI), cyclic electron flow around PSI, and state transitions. PetL is important for photoautotrophic growth as well as for electron transfer efficiency and stability of the cytochrome b6-f complex. In Adiantum capillus-veneris (Maidenhair fern), this protein is Cytochrome b6-f complex subunit 6.